The following is a 398-amino-acid chain: Phosphoglycerate kinase (398 aa).

Residues 21–23 (DFN), Arg-36, 59–62 (HLGR), Arg-119, and Arg-157 each bind substrate. ATP is bound by residues Lys-208, Gly-296, Glu-327, and 354 to 357 (GGDS).

This sequence belongs to the phosphoglycerate kinase family. As to quaternary structure, monomer.

The protein localises to the cytoplasm. The catalysed reaction is (2R)-3-phosphoglycerate + ATP = (2R)-3-phospho-glyceroyl phosphate + ADP. It functions in the pathway carbohydrate degradation; glycolysis; pyruvate from D-glyceraldehyde 3-phosphate: step 2/5. This is Phosphoglycerate kinase from Streptococcus pneumoniae (strain Taiwan19F-14).